Consider the following 108-residue polypeptide: uncharacterized protein (108 aa).

A helical transmembrane segment spans residues 64–84 (LFIIYYYYYLLICLSPHFFPI).

Its subcellular location is the membrane. This is an uncharacterized protein from Schizosaccharomyces pombe (strain 972 / ATCC 24843) (Fission yeast).